A 236-amino-acid polypeptide reads, in one-letter code: Glycosylphosphatidylinositol anchor biosynthesis protein 11 (236 aa).

2 helical membrane passes run 40 to 60 (TLTI…FGLT) and 65 to 85 (GVML…GYLI). An N-linked (GlcNAc...) asparagine glycan is attached at Asn99. 4 helical membrane passes run 107–127 (LLAG…VALI), 139–159 (ETYL…LVLY), 184–204 (ILLS…PIPL), and 215–235 (ITLL…CFLF).

It belongs to the PIGF family.

It is found in the endoplasmic reticulum membrane. It participates in glycolipid biosynthesis; glycosylphosphatidylinositol-anchor biosynthesis. In terms of biological role, acts in the GPI biosynthetic pathway between GlcNAc-PI synthesis and GPI transfer to protein. The polypeptide is Glycosylphosphatidylinositol anchor biosynthesis protein 11 (GPI11) (Debaryomyces hansenii (strain ATCC 36239 / CBS 767 / BCRC 21394 / JCM 1990 / NBRC 0083 / IGC 2968) (Yeast)).